The following is a 398-amino-acid chain: MSLVVMATGGTGGHIYPAVATAKELRGRGYEVALMGQKGGMEEGIAEREGLTFYGVDAGKLARSGQGRPDPRQLLKAGQGLAQARRTLAGLNPAAVVGYGGFASLPGVLAAQSLGIPTILHEQNARLGLTQRLAVRRARAVGTAYDKVIGLDPRKATLVGMPVREERMPRAEALAALGLRDGPITIMVMGGSQGSLYLNQQVPGILWRLFGKVGKLRGKGDSVPPIDLDLRGPHLIENARSREVQVLHATGPRWLAEVQPKVENLPWYHVTGYVDAVAAWSVADLGITRAGTGTLAEAAFHGVPLVMVPLPESAENHQYHNAVAVEQAGAGRVVEQKVLPETLEKVVLECAAPGKRAAMRDAAQKRARPGAAARFADLIEVQLRRAPSPTAHAPTAHD.

UDP-N-acetyl-alpha-D-glucosamine-binding positions include 11–13 (TGG), Asn-124, Arg-164, Ser-192, and Gln-318.

It belongs to the glycosyltransferase 28 family. MurG subfamily.

It is found in the cell membrane. The catalysed reaction is di-trans,octa-cis-undecaprenyl diphospho-N-acetyl-alpha-D-muramoyl-L-alanyl-D-glutamyl-meso-2,6-diaminopimeloyl-D-alanyl-D-alanine + UDP-N-acetyl-alpha-D-glucosamine = di-trans,octa-cis-undecaprenyl diphospho-[N-acetyl-alpha-D-glucosaminyl-(1-&gt;4)]-N-acetyl-alpha-D-muramoyl-L-alanyl-D-glutamyl-meso-2,6-diaminopimeloyl-D-alanyl-D-alanine + UDP + H(+). The protein operates within cell wall biogenesis; peptidoglycan biosynthesis. Functionally, cell wall formation. Catalyzes the transfer of a GlcNAc subunit on undecaprenyl-pyrophosphoryl-MurNAc-pentapeptide (lipid intermediate I) to form undecaprenyl-pyrophosphoryl-MurNAc-(pentapeptide)GlcNAc (lipid intermediate II). The polypeptide is UDP-N-acetylglucosamine--N-acetylmuramyl-(pentapeptide) pyrophosphoryl-undecaprenol N-acetylglucosamine transferase (Deinococcus radiodurans (strain ATCC 13939 / DSM 20539 / JCM 16871 / CCUG 27074 / LMG 4051 / NBRC 15346 / NCIMB 9279 / VKM B-1422 / R1)).